The sequence spans 283 residues: NADPH-dependent 7-cyano-7-deazaguanine reductase (283 aa).

Ile89 to Ser91 is a binding site for substrate. NADPH is bound at residue Ser91–Lys92. The Thioimide intermediate role is filled by Cys190. The Proton donor role is filled by Asp197. Substrate is bound at residue His229 to Glu230. Arg258–Gly259 lines the NADPH pocket.

It belongs to the GTP cyclohydrolase I family. QueF type 2 subfamily. In terms of assembly, homodimer.

The protein localises to the cytoplasm. It catalyses the reaction 7-aminomethyl-7-carbaguanine + 2 NADP(+) = 7-cyano-7-deazaguanine + 2 NADPH + 3 H(+). Its pathway is tRNA modification; tRNA-queuosine biosynthesis. Functionally, catalyzes the NADPH-dependent reduction of 7-cyano-7-deazaguanine (preQ0) to 7-aminomethyl-7-deazaguanine (preQ1). The protein is NADPH-dependent 7-cyano-7-deazaguanine reductase of Aromatoleum aromaticum (strain DSM 19018 / LMG 30748 / EbN1) (Azoarcus sp. (strain EbN1)).